A 380-amino-acid polypeptide reads, in one-letter code: 1-deoxy-D-xylulose 5-phosphate reductoisomerase 2 (380 aa).

8 residues coordinate NADPH: S10, G11, S12, I13, G36, K37, N38, and N120. Position 121 (K121) interacts with 1-deoxy-D-xylulose 5-phosphate. E122 lines the NADPH pocket. D146 contacts Mn(2+). 1-deoxy-D-xylulose 5-phosphate contacts are provided by S147, E148, S172, and H195. Mn(2+) is bound at residue E148. G201 contributes to the NADPH binding site. Residues S208, N213, K214, and E217 each coordinate 1-deoxy-D-xylulose 5-phosphate. E217 is a Mn(2+) binding site.

This sequence belongs to the DXR family. Mg(2+) is required as a cofactor. It depends on Mn(2+) as a cofactor.

It catalyses the reaction 2-C-methyl-D-erythritol 4-phosphate + NADP(+) = 1-deoxy-D-xylulose 5-phosphate + NADPH + H(+). The protein operates within isoprenoid biosynthesis; isopentenyl diphosphate biosynthesis via DXP pathway; isopentenyl diphosphate from 1-deoxy-D-xylulose 5-phosphate: step 1/6. Its function is as follows. Catalyzes the NADPH-dependent rearrangement and reduction of 1-deoxy-D-xylulose-5-phosphate (DXP) to 2-C-methyl-D-erythritol 4-phosphate (MEP). The sequence is that of 1-deoxy-D-xylulose 5-phosphate reductoisomerase 2 from Bacillus anthracis.